A 229-amino-acid chain; its full sequence is MENSLKIKDIPKNERPKEKLLSYGADTLNNSELLAIILRTGTKGENVLQLSNRLLSEFQGLDGILEASLDDITSIKGIKEGKASQILALAELFRRFRTFKSADRDIKIMSPNDIAMLINGEMSLLKQEILKVIFLNTKNIVIGTKDVFKGSLNTSIVHPREIFKEAVNKSSTKIIICHNHPSGDPTPSKEDINITLRIKECGEIMGIQLLDHIIIGKNGFISLKEKGFI.

In terms of domain architecture, MPN spans lysine 107–isoleucine 229. Zn(2+)-binding residues include histidine 178, histidine 180, and aspartate 191. The JAMM motif motif lies at histidine 178–aspartate 191.

It belongs to the UPF0758 family.

This chain is UPF0758 protein CLH_0547, found in Clostridium botulinum (strain Alaska E43 / Type E3).